The sequence spans 308 residues: uncharacterized protein (308 aa).

The next 7 helical transmembrane spans lie at 10–30 (IILL…TNLI), 91–111 (LPTI…VVIL), 115–135 (LGLI…LIGI), 178–198 (VIPM…LGLM), 219–239 (ITVL…VDIL), 251–271 (LIVL…KHSI), and 288–308 (INYT…IAFF).

To M.jannaschii MJ0871, MJ1556 and MJ1589.

It is found in the cell membrane. This is an uncharacterized protein from Methanocaldococcus jannaschii (strain ATCC 43067 / DSM 2661 / JAL-1 / JCM 10045 / NBRC 100440) (Methanococcus jannaschii).